Reading from the N-terminus, the 258-residue chain is MASPREENVYMAKLAEQAERYEEMVEFMEKVVAAADGAEELTVEERNLLSVAYKNVIGARRASWRIISSIEQKEESRGNEDHVASIKEYRSKIESELTSICNGILKLLDSKLIGSAATGDSKVFYLKMKGDYHRYLAEFKTGAERKEAAENTLSAYKAAQDIANAELAPTHPIRLGLALNFSVFYYEILNSPDRACNLAKQAFDEAIAELDTLGEESYKDSTLIMQLLRDNLTLWTSDMQDDGTDEIKEAAPKPDNNE.

The tract at residues 238–258 is disordered; sequence DMQDDGTDEIKEAAPKPDNNE. Residues 245–258 are compositionally biased toward basic and acidic residues; the sequence is DEIKEAAPKPDNNE.

Belongs to the 14-3-3 family.

The polypeptide is 14-3-3-like protein 16R (Solanum tuberosum (Potato)).